The following is a 349-amino-acid chain: Sterol-4-alpha-carboxylate 3-dehydrogenase ERG26, decarboxylating (349 aa).

NADP(+) contacts are provided by residues 11 to 17 (GGSGFLG), 62 to 63 (DL), and 84 to 86 (CAS). Ser-124 and Tyr-151 together coordinate substrate. Residues Tyr-151, Lys-155, and 179-182 (PAGI) each bind NADP(+). The Proton donor role is filled by Lys-155.

It belongs to the 3-beta-HSD family. As to quaternary structure, heterotetramer of ERG25, ERG26, ERG27 and ERG28. ERG28 acts as a scaffold to tether ERG27 and other 4,4-demethylation-related enzymes, forming a demethylation enzyme complex, in the endoplasmic reticulum.

Its subcellular location is the endoplasmic reticulum membrane. The catalysed reaction is 4beta-methylzymosterol-4alpha-carboxylate + NADP(+) = 3-dehydro-4-methylzymosterol + CO2 + NADPH. It functions in the pathway steroid biosynthesis; zymosterol biosynthesis; zymosterol from lanosterol: step 4/6. With respect to regulation, inhibited by FR171456, a natural product with broad antifungal activity. Its function is as follows. Sterol-4-alpha-carboxylate 3-dehydrogenase; part of the third module of ergosterol biosynthesis pathway that includes the late steps of the pathway. ERG26 is a catalytic component of the C-4 demethylation complex that catalyzes the oxidative decarboxylation that results in a reduction of the 3-beta-hydroxy group at the C-3 carbon to an oxo group. The third module or late pathway involves the ergosterol synthesis itself through consecutive reactions that mainly occur in the endoplasmic reticulum (ER) membrane. Firstly, the squalene synthase ERG9 catalyzes the condensation of 2 farnesyl pyrophosphate moieties to form squalene, which is the precursor of all steroids. Squalene synthase is crucial for balancing the incorporation of farnesyl diphosphate (FPP) into sterol and nonsterol isoprene synthesis. Secondly, the squalene epoxidase ERG1 catalyzes the stereospecific oxidation of squalene to (S)-2,3-epoxysqualene, which is considered to be a rate-limiting enzyme in steroid biosynthesis. Then, the lanosterol synthase ERG7 catalyzes the cyclization of (S)-2,3 oxidosqualene to lanosterol, a reaction that forms the sterol core. In the next steps, lanosterol is transformed to zymosterol through a complex process involving various demethylation, reduction and desaturation reactions. The lanosterol 14-alpha-demethylase ERG11 (also known as CYP51) catalyzes C14-demethylation of lanosterol to produce 4,4'-dimethyl cholesta-8,14,24-triene-3-beta-ol, which is critical for ergosterol biosynthesis. The C-14 reductase ERG24 reduces the C14=C15 double bond of 4,4-dimethyl-cholesta-8,14,24-trienol to produce 4,4-dimethyl-cholesta-8,24-dienol. 4,4-dimethyl-cholesta-8,24-dienol is substrate of the C-4 demethylation complex ERG25-ERG26-ERG27 in which ERG25 catalyzes the three-step monooxygenation required for the demethylation of 4,4-dimethyl and 4alpha-methylsterols, ERG26 catalyzes the oxidative decarboxylation that results in a reduction of the 3-beta-hydroxy group at the C-3 carbon to an oxo group, and ERG27 is responsible for the reduction of the keto group on the C-3. ERG28 has a role as a scaffold to help anchor ERG25, ERG26 and ERG27 to the endoplasmic reticulum and ERG29 regulates the activity of the iron-containing C4-methylsterol oxidase ERG25. Then, the sterol 24-C-methyltransferase ERG6 catalyzes the methyl transfer from S-adenosyl-methionine to the C-24 of zymosterol to form fecosterol. The C-8 sterol isomerase ERG2 catalyzes the reaction which results in unsaturation at C-7 in the B ring of sterols and thus converts fecosterol to episterol. The sterol-C5-desaturase ERG3 then catalyzes the introduction of a C-5 double bond in the B ring to produce 5-dehydroepisterol. The C-22 sterol desaturase ERG5 further converts 5-dehydroepisterol into ergosta-5,7,22,24(28)-tetraen-3beta-ol by forming the C-22(23) double bond in the sterol side chain. Finally, ergosta-5,7,22,24(28)-tetraen-3beta-ol is substrate of the C-24(28) sterol reductase ERG4 to produce ergosterol. In Saccharomyces cerevisiae (strain ATCC 204508 / S288c) (Baker's yeast), this protein is Sterol-4-alpha-carboxylate 3-dehydrogenase ERG26, decarboxylating.